The chain runs to 547 residues: Cellodextrinase (547 aa).

Aspartate 148 acts as the Nucleophile in catalysis. Catalysis depends on residues histidine 474, aspartate 520, and glutamate 529.

This sequence belongs to the glycosyl hydrolase 9 (cellulase E) family.

It is found in the secreted. It carries out the reaction Endohydrolysis of (1-&gt;4)-beta-D-glucosidic linkages in cellulose, lichenin and cereal beta-D-glucans.. With respect to regulation, is not inhibited by methylcellulose. In terms of biological role, glycoside hydrolase that rapidly hydrolyzes short-chain cellodextrins to yield either cellobiose or cellobiose and glucose as end products; cellobiose is not hydrolyzed further. Also shows limited activity against endoglucanase specific substrates (carboxymethylcellulose (CMC), lichenan, laminarin and xylan). This is Cellodextrinase from Butyrivibrio fibrisolvens.